Reading from the N-terminus, the 576-residue chain is Putative export ATP-binding/permease protein RF_0214 (576 aa).

The ABC transmembrane type-1 domain maps to 20 to 303; that stretch reads LIIVMISLLS…IFELLSEIHL (284 aa). Transmembrane regions (helical) follow at residues 21 to 41, 61 to 81, 135 to 155, 158 to 178, 242 to 262, and 277 to 297; these read IIVM…GSVF, ILYI…RSYF, FLSF…LMFF, FKLA…LIKF, ALFF…VVWI, and IISF…IFEL. The region spanning 336–572 is the ABC transporter domain; the sequence is IEFKNVDFTY…SEIYRNICRE (237 aa). Residue 371–378 coordinates ATP; it reads GRSGGGKS.

It belongs to the ABC transporter superfamily. In terms of assembly, homodimer.

Its subcellular location is the cell inner membrane. Functionally, part of an ABC transporter complex. Transmembrane domains (TMD) form a pore in the inner membrane and the ATP-binding domain (NBD) is responsible for energy generation. The chain is Putative export ATP-binding/permease protein RF_0214 from Rickettsia felis (strain ATCC VR-1525 / URRWXCal2) (Rickettsia azadi).